The primary structure comprises 248 residues: Small ribosomal subunit protein uS2 (248 aa).

Belongs to the universal ribosomal protein uS2 family.

This chain is Small ribosomal subunit protein uS2, found in Dechloromonas aromatica (strain RCB).